The chain runs to 1199 residues: DNA-directed RNA polymerase subunit beta (1199 aa).

Positions 1175-1199 are disordered; the sequence is EEKKAHEAAAQATDGKSANSTDDKK. Positions 1188–1199 are enriched in polar residues; sequence DGKSANSTDDKK.

It belongs to the RNA polymerase beta chain family. In terms of assembly, the RNAP catalytic core consists of 2 alpha, 1 beta, 1 beta' and 1 omega subunit. When a sigma factor is associated with the core the holoenzyme is formed, which can initiate transcription.

It catalyses the reaction RNA(n) + a ribonucleoside 5'-triphosphate = RNA(n+1) + diphosphate. DNA-dependent RNA polymerase catalyzes the transcription of DNA into RNA using the four ribonucleoside triphosphates as substrates. In Lacticaseibacillus paracasei (strain ATCC 334 / BCRC 17002 / CCUG 31169 / CIP 107868 / KCTC 3260 / NRRL B-441) (Lactobacillus paracasei), this protein is DNA-directed RNA polymerase subunit beta.